A 366-amino-acid chain; its full sequence is Ferredoxin--NADP reductase (366 aa).

FAD contacts are provided by aspartate 51, glutamine 59, tyrosine 64, valine 104, phenylalanine 139, aspartate 308, and threonine 349.

It belongs to the ferredoxin--NADP reductase type 2 family. As to quaternary structure, homodimer. The cofactor is FAD.

The enzyme catalyses 2 reduced [2Fe-2S]-[ferredoxin] + NADP(+) + H(+) = 2 oxidized [2Fe-2S]-[ferredoxin] + NADPH. This is Ferredoxin--NADP reductase from Polaromonas naphthalenivorans (strain CJ2).